The chain runs to 431 residues: 3-isopropylmalate dehydratase large subunit (431 aa).

Residues Cys300, Cys360, and Cys363 each contribute to the [4Fe-4S] cluster site.

This sequence belongs to the aconitase/IPM isomerase family. LeuC type 2 subfamily. Heterodimer of LeuC and LeuD. Requires [4Fe-4S] cluster as cofactor.

It catalyses the reaction (2R,3S)-3-isopropylmalate = (2S)-2-isopropylmalate. It participates in amino-acid biosynthesis; L-leucine biosynthesis; L-leucine from 3-methyl-2-oxobutanoate: step 2/4. In terms of biological role, catalyzes the isomerization between 2-isopropylmalate and 3-isopropylmalate, via the formation of 2-isopropylmaleate. The polypeptide is 3-isopropylmalate dehydratase large subunit (Sulfurihydrogenibium sp. (strain YO3AOP1)).